A 133-amino-acid polypeptide reads, in one-letter code: Cytochrome c' (133 aa).

The heme c site is built by Arg-12, Thr-72, Cys-122, Cys-125, and His-126.

Post-translationally, binds 1 heme c group covalently per subunit.

Cytochrome c' is the most widely occurring bacterial c-type cytochrome. Cytochromes c' are high-spin proteins and the heme has no sixth ligand. Their exact function is not known. The protein is Cytochrome c' of Rhodocyclus tenuis (Rhodospirillum tenue).